Reading from the N-terminus, the 70-residue chain is Translation initiation factor IF-1 (70 aa).

In terms of domain architecture, S1-like spans 1–70 (MKNDKLFLTG…LKLGRITQRK (70 aa)).

This sequence belongs to the IF-1 family. Component of the 30S ribosomal translation pre-initiation complex which assembles on the 30S ribosome in the order IF-2 and IF-3, IF-1 and N-formylmethionyl-tRNA(fMet); mRNA recruitment can occur at any time during PIC assembly.

The protein localises to the cytoplasm. Functionally, one of the essential components for the initiation of protein synthesis. Stabilizes the binding of IF-2 and IF-3 on the 30S subunit to which N-formylmethionyl-tRNA(fMet) subsequently binds. Helps modulate mRNA selection, yielding the 30S pre-initiation complex (PIC). Upon addition of the 50S ribosomal subunit IF-1, IF-2 and IF-3 are released leaving the mature 70S translation initiation complex. In Mycoplasma genitalium (strain ATCC 33530 / DSM 19775 / NCTC 10195 / G37) (Mycoplasmoides genitalium), this protein is Translation initiation factor IF-1.